The following is a 419-amino-acid chain: Glycine, glutamate and proline-rich protein (419 aa).

Positions 1 to 16 (MKCLVALFLSLSLVAC) are cleaved as a signal peptide. Residues 74 to 152 (VERESEEAEG…VDMCAGESRR (79 aa)) are disordered. Residues 76-85 (RESEEAEGEG) show a composition bias toward acidic residues. Over residues 86-130 (TDGRGGGEGEREGWGGEREGGEGEREGGEGEREGREGEREGKSSE) the composition is skewed to basic and acidic residues.

In the C-terminal section; belongs to the glycosyl hydrolase 23 family. As to expression, component of the acid-insoluble organic matrix of calcified layers of the shell (at protein level).

The protein resides in the secreted. This chain is Glycine, glutamate and proline-rich protein, found in Lottia gigantea (Giant owl limpet).